A 371-amino-acid chain; its full sequence is Undecaprenyl-diphosphatase 1 (371 aa).

Helical transmembrane passes span 53–73 (PYLAFIVAVHVATAAALIVAF), 100–120 (LAWLIILGTVPVGIVGLLLEH), and 126–146 (LGRPLPAAVFLTVNGMIMLLG). The interval 152-226 (RSTTRGAPGP…PEAEDVTLPE (75 aa)) is disordered. The next 3 helical transmembrane spans lie at 291 to 311 (FAFLLATPVILAAGLLKLPDL), 322 to 342 (QTLFGAIVAGVVAYVSIRFLA), and 351 to 371 (TPFAVYCLVAGALCVVRFGIF).

Belongs to the UppP family.

It is found in the cell membrane. It carries out the reaction di-trans,octa-cis-undecaprenyl diphosphate + H2O = di-trans,octa-cis-undecaprenyl phosphate + phosphate + H(+). Its function is as follows. Catalyzes the dephosphorylation of undecaprenyl diphosphate (UPP). Confers resistance to bacitracin. In Frankia casuarinae (strain DSM 45818 / CECT 9043 / HFP020203 / CcI3), this protein is Undecaprenyl-diphosphatase 1.